The primary structure comprises 426 residues: Serine hydroxymethyltransferase 1 (426 aa).

(6S)-5,6,7,8-tetrahydrofolate is bound by residues leucine 121 and 125 to 127 (GHL). Residue lysine 230 is modified to N6-(pyridoxal phosphate)lysine. 355 to 357 (SPF) provides a ligand contact to (6S)-5,6,7,8-tetrahydrofolate.

This sequence belongs to the SHMT family. In terms of assembly, homodimer. Pyridoxal 5'-phosphate serves as cofactor.

Its subcellular location is the cytoplasm. It carries out the reaction (6R)-5,10-methylene-5,6,7,8-tetrahydrofolate + glycine + H2O = (6S)-5,6,7,8-tetrahydrofolate + L-serine. The protein operates within one-carbon metabolism; tetrahydrofolate interconversion. Its pathway is amino-acid biosynthesis; glycine biosynthesis; glycine from L-serine: step 1/1. Catalyzes the reversible interconversion of serine and glycine with tetrahydrofolate (THF) serving as the one-carbon carrier. This reaction serves as the major source of one-carbon groups required for the biosynthesis of purines, thymidylate, methionine, and other important biomolecules. Also exhibits THF-independent aldolase activity toward beta-hydroxyamino acids, producing glycine and aldehydes, via a retro-aldol mechanism. This is Serine hydroxymethyltransferase 1 from Hahella chejuensis (strain KCTC 2396).